Consider the following 914-residue polypeptide: Golgin candidate 6 (914 aa).

Coiled coils occupy residues 723–837 and 863–901; these read IEKQ…SLKG and EDEL…LEDI. At serine 911 the chain carries Phosphoserine.

It localises to the golgi apparatus. The protein localises to the golgi stack. Its function is as follows. Golgi matrix protein playing a role in tethering of vesicles to Golgi membranes and in maintaining the overall structure of the Golgi apparatus. Functions in the anterograde transport of storage protein precursors from the endoplasmic reticulum (ER) to the Golgi complex. The sequence is that of Golgin candidate 6 (GC6) from Arabidopsis thaliana (Mouse-ear cress).